Reading from the N-terminus, the 906-residue chain is Nuclear factor NF-kappa-B p100 subunit (906 aa).

Residues 34 to 223 (AVGPYLVIIE…DPIHDSKSPG (190 aa)) enclose the RHD domain. Positions 336-340 (RNRKK) match the Nuclear localization signal motif. The interval 345–374 (FPQHFGGGSHMGGAGGAGGFGAGGGGNLSF) is GRR. ANK repeat units lie at residues 472–501 (NGDTPLHLAIIHEQTAVIKQLIEVVVSIPS), 511–540 (LQQTPLHLAVITKQPQVVQLLLEAHANPTL), 544–573 (YGNSLLHLALQAADEEMLRMLLAHLASATP), 582–611 (QGLLPVHLAVKAKSPACLDLLVRKGADVNG), 616–646 (GGRTPLHLAVEMENLNMATHLVKKLGANVNS), and 650–679 (AGNTPLHLAAGLGSPTLTKLLLKAGADVQR). Disordered regions lie at residues 677–734 (VQRE…GPRQ) and 857–906 (EPLE…QQVH). A compositionally biased stretch (low complexity) spans 684–695 (PVSPSSVRVPSS). Residues 697-708 (TDGDPEEQEQEQ) show a composition bias toward acidic residues. Residues 771 to 857 (RNHLLSLDTD…GAVRMLRKPE (87 aa)) form the Death domain.

In terms of assembly, component of the NF-kappa-B RelB-p52 complex. In terms of processing, while translation occurs, the particular unfolded structure after the GRR repeat promotes the generation of p52 making it an acceptable substrate for the proteasome. This process is known as cotranslational processing. The processed form is active and the unprocessed form acts as an inhibitor (I kappa B-like), being able to form cytosolic complexes with NF-kappa B, trapping it in the cytoplasm. Complete folding of the region downstream of the GRR repeat precludes processing. Post-translationally, constitutive processing is tightly suppressed by its C-terminal processing inhibitory domain, named PID, which contains the death domain.

It localises to the nucleus. Its subcellular location is the cytoplasm. In terms of biological role, NF-kappa-B is a pleiotropic transcription factor present in almost all cell types and is the endpoint of a series of signal transduction events that are initiated by a vast array of stimuli related to many biological processes such as inflammation, immunity, differentiation, cell growth, tumorigenesis and apoptosis. NF-kappa-B is a homo- or heterodimeric complex formed by the Rel-like domain-containing proteins RELA/p65, RELB, NFKB1/p105, NFKB1/p50, REL and NFKB2/p52. The dimers bind at kappa-B sites in the DNA of their target genes and the individual dimers have distinct preferences for different kappa-B sites that they can bind with distinguishable affinity and specificity. Different dimer combinations act as transcriptional activators or repressors, respectively. NF-kappa-B is controlled by various mechanisms of post-translational modification and subcellular compartmentalization as well as by interactions with other cofactors or corepressors. NF-kappa-B complexes are held in the cytoplasm in an inactive state complexed with members of the NF-kappa-B inhibitor (I-kappa-B) family. In a conventional activation pathway, I-kappa-B is phosphorylated by I-kappa-B kinases (IKKs) in response to different activators, subsequently degraded thus liberating the active NF-kappa-B complex which translocates to the nucleus. In a non-canonical activation pathway, the MAP3K14-activated CHUK/IKKA homodimer phosphorylates NFKB2/p100 associated with RelB, inducing its proteolytic processing to NFKB2/p52 and the formation of NF-kappa-B RelB-p52 complexes. The NF-kappa-B heterodimeric RelB-p52 complex is a transcriptional activator. NFKB2 appears to have dual functions such as cytoplasmic retention of attached NF-kappa-B proteins by p100 and generation of p52 by a cotranslational processing. The proteasome-mediated process ensures the production of both p52 and p100 and preserves their independent function. p52 binds to the kappa-B consensus sequence 5'-GGRNNYYCC-3', located in the enhancer region of genes involved in immune response and acute phase reactions. In concert with RELB, may play a role in the regulation of the circadian clock. This Gallus gallus (Chicken) protein is Nuclear factor NF-kappa-B p100 subunit (NFKB2).